The following is a 373-amino-acid chain: Glutamine synthetase (373 aa).

N-acetylalanine is present on Ala2. Residues 2 to 25 (ATSASSHLNKGIKQVYMSLPQGEK) form a required for glutamine-induced ubiquitination by CRL4(CRBN) and proteasomal degradation region. Lys11 and Lys14 each carry N6-acetyllysine. A GS beta-grasp domain is found at 24–106 (EKVQAMYIWI…VFCEVFKYNR (83 aa)). Tyr104 bears the Phosphotyrosine mark. A GS catalytic domain is found at 113 to 373 (LRHTCKRIMD…TGDEPFQYKN (261 aa)). An ATP-binding site is contributed by Glu134. 4 residues coordinate Mn(2+): Glu134, Glu136, Glu196, and Glu203. 203–208 (EFQIGP) is a binding site for ATP. 246–247 (NW) contacts L-glutamate. Residue His253 participates in Mn(2+) binding. Residues 255–257 (NFS), Arg319, and Arg324 each bind ATP. Arg319 contacts L-glutamate. An ADP-binding site is contributed by 336-338 (YFE). Glu338 is a binding site for Mn(2+). Arg340 serves as a coordination point for L-glutamate. Ser343 carries the phosphoserine modification.

It belongs to the glutamine synthetase family. Decamer; composed of two pentamers. Interacts with PALMD. Interacts with RHOJ. Interacts with BEST2; this interaction tethers a fraction of GLUL to the membrane, causing a decrease of cytosolic glutamine synthase (GS) activity and inhibits the chloride channel activity of BEST2 by affecting the gating at the aperture in the absence of intracellular glutamate. Requires Mg(2+) as cofactor. The cofactor is Mn(2+). In terms of processing, palmitoylated; undergoes autopalmitoylation. Acetylated by EP300/p300; acetylation is stimulated by increased glutamine levels and promotes ubiquitin-mediated proteasomal degradation. Post-translationally, ubiquitinated by ZNRF1. Ubiquitinated by the DCX (DDB1-CUL4-X-box) E3 ubiquitin-protein ligase complex called CRL4(CRBN), leading to proteasomal degradation.

The protein resides in the cytoplasm. It localises to the cytosol. Its subcellular location is the microsome. It is found in the mitochondrion. The protein localises to the cell membrane. The enzyme catalyses L-glutamate + NH4(+) + ATP = L-glutamine + ADP + phosphate + H(+). It catalyses the reaction L-cysteinyl-[protein] + hexadecanoyl-CoA = S-hexadecanoyl-L-cysteinyl-[protein] + CoA. Glutamine synthetase activity is inhibited by methionine sulfoximine (MSO). Functionally, glutamine synthetase that catalyzes the ATP-dependent conversion of glutamate and ammonia to glutamine. Its role depends on tissue localization: in the brain, it regulates the levels of toxic ammonia and converts neurotoxic glutamate to harmless glutamine, whereas in the liver, it is one of the enzymes responsible for the removal of ammonia. Plays a key role in ammonium detoxification during erythropoiesis: the glutamine synthetase activity is required to remove ammonium generated by porphobilinogen deaminase (HMBS) during heme biosynthesis to prevent ammonium accumulation and oxidative stress. Essential for proliferation of fetal skin fibroblasts. Independently of its glutamine synthetase activity, required for endothelial cell migration during vascular development. Involved in angiogenesis by regulating membrane localization and activation of the GTPase RHOJ, possibly by promoting RHOJ palmitoylation. May act as a palmitoyltransferase for RHOJ: able to autopalmitoylate and then transfer the palmitoyl group to RHOJ. Plays a role in ribosomal 40S subunit biogenesis. Through the interaction with BEST2, inhibits BEST2 channel activity by affecting the gating at the aperture in the absence of intracellular L-glutamate, but sensitizes BEST2 to intracellular L-glutamate, which promotes the opening of BEST2 and thus relieves its inhibitory effect on BEST2. The protein is Glutamine synthetase of Sus scrofa (Pig).